The following is a 350-amino-acid chain: Glucose-6-phosphate 3-dehydrogenase (350 aa).

This sequence belongs to the Gfo/Idh/MocA family.

It catalyses the reaction D-glucose 6-phosphate + NAD(+) = 3-dehydro-D-glucose 6-phosphate + NADH + H(+). It functions in the pathway antibiotic biosynthesis; kanosamine biosynthesis. Functionally, involved in the biosynthesis of kanosamine (3-amino-3-deoxy-D-glucose), which is known to have antibiotic and antifungal properties, and to be a precursor of the antibiotic neotrehalosadiamine (3,3'-diamino-3,3'-dideoxy-alpha,beta-trehalose (NTD)). Catalyzes the oxidation of glucose 6-phosphate to 3-oxo-D-glucose 6-phosphate. It can only use NAD. The sequence is that of Glucose-6-phosphate 3-dehydrogenase (ntdC) from Bacillus subtilis (strain 168).